Here is a 426-residue protein sequence, read N- to C-terminus: 5-methylthioadenosine/S-adenosylhomocysteine deaminase (426 aa).

H60 and H62 together coordinate Zn(2+). Substrate contacts are provided by E89 and H179. H206 contacts Zn(2+). Substrate contacts are provided by E209 and D294. D294 lines the Zn(2+) pocket.

This sequence belongs to the metallo-dependent hydrolases superfamily. MTA/SAH deaminase family. Zn(2+) is required as a cofactor.

It carries out the reaction S-adenosyl-L-homocysteine + H2O + H(+) = S-inosyl-L-homocysteine + NH4(+). The enzyme catalyses S-methyl-5'-thioadenosine + H2O + H(+) = S-methyl-5'-thioinosine + NH4(+). Functionally, catalyzes the deamination of 5-methylthioadenosine and S-adenosyl-L-homocysteine into 5-methylthioinosine and S-inosyl-L-homocysteine, respectively. Is also able to deaminate adenosine. This is 5-methylthioadenosine/S-adenosylhomocysteine deaminase from Dictyoglomus thermophilum (strain ATCC 35947 / DSM 3960 / H-6-12).